Consider the following 180-residue polypeptide: Large ribosomal subunit protein uL5 (180 aa).

It belongs to the universal ribosomal protein uL5 family. As to quaternary structure, part of the 50S ribosomal subunit; part of the 5S rRNA/L5/L18/L25 subcomplex. Contacts the 5S rRNA and the P site tRNA. Forms a bridge to the 30S subunit in the 70S ribosome.

In terms of biological role, this is one of the proteins that bind and probably mediate the attachment of the 5S RNA into the large ribosomal subunit, where it forms part of the central protuberance. In the 70S ribosome it contacts protein S13 of the 30S subunit (bridge B1b), connecting the 2 subunits; this bridge is implicated in subunit movement. Contacts the P site tRNA; the 5S rRNA and some of its associated proteins might help stabilize positioning of ribosome-bound tRNAs. The polypeptide is Large ribosomal subunit protein uL5 (Lactobacillus johnsonii (strain CNCM I-12250 / La1 / NCC 533)).